Reading from the N-terminus, the 632-residue chain is Probable potassium transport system protein Kup (632 aa).

12 helical membrane-spanning segments follow: residues 19–39, 59–79, 110–130, 146–166, 178–198, 221–241, 256–276, 298–318, 346–366, 375–395, 403–423, and 428–448; these read LVVG…LYSL, IISM…VMFV, LIMM…VITP, PGLS…LFFI, FGPI…IHLV, LQAF…EALY, WFVL…AMLL, MVLL…SGAF, IYMP…VLAF, AYGI…ALVM, PALV…FFAA, and IAEG…LLMT.

Belongs to the HAK/KUP transporter (TC 2.A.72) family.

The protein resides in the cell inner membrane. It catalyses the reaction K(+)(in) + H(+)(in) = K(+)(out) + H(+)(out). Its function is as follows. Transport of potassium into the cell. Likely operates as a K(+):H(+) symporter. This Cupriavidus metallidurans (strain ATCC 43123 / DSM 2839 / NBRC 102507 / CH34) (Ralstonia metallidurans) protein is Probable potassium transport system protein Kup.